The primary structure comprises 349 residues: tRNA pseudouridine synthase D (349 aa).

Residue F26 participates in substrate binding. The active-site Nucleophile is the D79. N128 contributes to the substrate binding site. In terms of domain architecture, TRUD spans 154-302 (GVPNYFGSQR…VEGARRAILL (149 aa)). F328 contributes to the substrate binding site.

The protein belongs to the pseudouridine synthase TruD family.

The catalysed reaction is uridine(13) in tRNA = pseudouridine(13) in tRNA. Functionally, responsible for synthesis of pseudouridine from uracil-13 in transfer RNAs. This chain is tRNA pseudouridine synthase D, found in Yersinia enterocolitica serotype O:8 / biotype 1B (strain NCTC 13174 / 8081).